The chain runs to 1279 residues: ATP-dependent helicase/nuclease subunit A (1279 aa).

The UvrD-like helicase ATP-binding domain occupies 4 to 499 (TKWTDEQRQA…VKLFKNFRSR (496 aa)). Position 25-32 (25-32 (AGAGAGKT)) interacts with ATP. The UvrD-like helicase C-terminal domain maps to 526-853 (EEALKVGASY…RIMSIHKSKG (328 aa)).

The protein belongs to the helicase family. AddA subfamily. Heterodimer of AddA and AddB/RexB. Requires Mg(2+) as cofactor.

The catalysed reaction is Couples ATP hydrolysis with the unwinding of duplex DNA by translocating in the 3'-5' direction.. It catalyses the reaction ATP + H2O = ADP + phosphate + H(+). The heterodimer acts as both an ATP-dependent DNA helicase and an ATP-dependent, dual-direction single-stranded exonuclease. Recognizes the chi site generating a DNA molecule suitable for the initiation of homologous recombination. The AddA nuclease domain is required for chi fragment generation; this subunit has the helicase and 3' -&gt; 5' nuclease activities. The chain is ATP-dependent helicase/nuclease subunit A from Clostridium botulinum (strain Langeland / NCTC 10281 / Type F).